Here is a 344-residue protein sequence, read N- to C-terminus: MSNPILLGIFWHFIGAASAACFYAPFKQVKNWSWETMWSLGGFFSWIILPWSISWWLLPDFWRYYGSFDMATLLPIFLFGAMWGIGNINYGLTMRYLGMSMGIGIAIGVTLIIGTLMTPVLQGKFSVLFGSPGGQMTLLGVLVAVIGVAIVSYAGLLKERALGIRAEEFSLKKGLILAVMCGIFSAGMSFAMDAAKPMHTAAQALGINSLYVALPSYVVIMGGGAIVNLGFCFIRLATCKGISLKADLAQAKPLLIANALFAILGGVMWYLQFFFYAWGHANIPADYTYISWMLHMSFYVLCGGIVGLLFKEWKAVGQKPVRMLVLGCVVIILAANIVGLGMAV.

10 consecutive transmembrane segments (helical) span residues 4-24 (PILL…CFYA), 38-58 (WSLG…WWLL), 68-88 (FDMA…IGNI), 101-121 (MGIG…TPVL), 137-157 (TLLG…AGLL), 175-195 (LILA…MDAA), 214-234 (LPSY…FCFI), 255-275 (LIAN…QFFF), 290-310 (ISWM…GLLF), and 324-344 (LVLG…GMAV).

The protein belongs to the L-rhamnose transporter (TC 2.A.7.6) family.

The protein resides in the cell inner membrane. The catalysed reaction is L-rhamnopyranose(in) + H(+)(in) = L-rhamnopyranose(out) + H(+)(out). Its function is as follows. Uptake of L-rhamnose across the cytoplasmic membrane with the concomitant transport of protons into the cell (symport system). The sequence is that of L-rhamnose-proton symporter from Pectobacterium atrosepticum (strain SCRI 1043 / ATCC BAA-672) (Erwinia carotovora subsp. atroseptica).